A 737-amino-acid chain; its full sequence is Translation initiation factor IF-2 (737 aa).

The segment covering 69-80 (EKKEEKPIRKIM) has biased composition (basic and acidic residues). A disordered region spans residues 69-130 (EKKEEKPIRK…HKNKGKKKKG (62 aa)). Composition is skewed to basic residues over residues 95-108 (NNKK…KNKK) and 121-130 (HKNKGKKKKG). The tr-type G domain occupies 237-404 (ERPPVITIMG…TILITAEILE (168 aa)). The segment at 246–253 (GHVDHGKT) is G1. 246-253 (GHVDHGKT) is a binding site for GTP. Residues 271 to 275 (GITQK) are G2. The G3 stretch occupies residues 292 to 295 (DTPG). GTP contacts are provided by residues 292-296 (DTPGH) and 346-349 (NKID). The segment at 346-349 (NKID) is G4. A G5 region spans residues 382-384 (SAK).

The protein belongs to the TRAFAC class translation factor GTPase superfamily. Classic translation factor GTPase family. IF-2 subfamily.

It localises to the cytoplasm. In terms of biological role, one of the essential components for the initiation of protein synthesis. Protects formylmethionyl-tRNA from spontaneous hydrolysis and promotes its binding to the 30S ribosomal subunits. Also involved in the hydrolysis of GTP during the formation of the 70S ribosomal complex. This is Translation initiation factor IF-2 from Fusobacterium nucleatum subsp. nucleatum (strain ATCC 25586 / DSM 15643 / BCRC 10681 / CIP 101130 / JCM 8532 / KCTC 2640 / LMG 13131 / VPI 4355).